Consider the following 104-residue polypeptide: Integration host factor subunit beta (104 aa).

This sequence belongs to the bacterial histone-like protein family. Heterodimer of an alpha and a beta chain.

In terms of biological role, this protein is one of the two subunits of integration host factor, a specific DNA-binding protein that functions in genetic recombination as well as in transcriptional and translational control. This chain is Integration host factor subunit beta (ihfB), found in Neisseria gonorrhoeae.